Reading from the N-terminus, the 649-residue chain is Flavin-dependent oxygenase ucdD (649 aa).

The FAD site is built by Gln-92, Ile-185, Tyr-344, Asp-370, and Ser-386.

It belongs to the PheA/TfdB FAD monooxygenase family. As to quaternary structure, homodimer. FAD is required as a cofactor.

Its pathway is secondary metabolite biosynthesis. Its function is as follows. Nonribosomal peptide synthetase that mediates the biosynthesis of usterphenyllins and uscandidusins, p-terphenyl derivatives. Within the pathway, ucdD catalyzes the formation of 3,15-dihydroxyterphenyllin via dihydroxylation at C-3 of ring A and C-15 of ring C of the terphenyllin intermediate. The pathway begin with the biosynthesis of 4-hydroxyphenylpyruvate (HPPA) from L-tyrosine, possibly by the aminotransferase ucdG. The nonribosomal peptide synthetase ucdA then condenses two HPPA units to produce atromentin. The key step in this pathway is the reduction and dehydration of atromentin to form a terphenyl triol intermediate, performed by the NAD-dependent dehydrogenase ucdB. Further O-methylation by the methyltransferase ucdC forms terphenyllin carrying two methoxy moieties at C-9 and C-12, and subsequent dihydroxylation at C-3 of ring A and C-15 of ring C by the flavin-dependent oxygenase ucdD leads to 3,15-dihydroxyterphenyllin. Prenylation by ucdE at position C-5 of ring A forms usterphenyllin B, and is followed by a second prenylation at position C-14 of ring C to form usterphenyllin A. The following furan ring formation that leads to uscandidusins A and B was proven to be an unexpected spontaneous non-enzymatic reaction. The protein is Flavin-dependent oxygenase ucdD of Aspergillus ustus.